The following is a 205-amino-acid chain: Putative 3-methyladenine DNA glycosylase (205 aa).

Belongs to the DNA glycosylase MPG family.

The chain is Putative 3-methyladenine DNA glycosylase from Bacillus cereus (strain ZK / E33L).